A 263-amino-acid chain; its full sequence is Protein OPG165 (263 aa).

This sequence belongs to the orthopoxvirus OPG165 family.

In Homo sapiens (Human), this protein is Protein OPG165 (OPG165).